We begin with the raw amino-acid sequence, 586 residues long: Old nuclease (586 aa).

Positions 1-163 (MTVRLASVSI…VEDSTKCKNT (163 aa)) are ATPase domain N-terminus. Position 34 to 38 (34 to 38 (NAGKS)) interacts with ATP. The segment at 164–270 (TTIGKILSAI…SRFGHGTQRS (107 aa)) is dimerization domain. Residues 271-390 (IQMALIQYLA…TLSNSSYLLF (120 aa)) are ATPase domain C-terminus. Positions 393–586 (EVLLVEGKTE…DEMEDFIKWI (194 aa)) are toprim domain. Positions 398, 402, 453, 455, 541, and 543 each coordinate a divalent metal cation. R570 serves as the catalytic Stabilizes transition state or protonates leaving group.

The protein belongs to the class 1 OLD nuclease family. The cofactor is Mg(2+).

It carries out the reaction Exonucleolytic cleavage in the 5'- to 3'-direction to yield nucleoside 5'-phosphates.. Functionally, an exonuclease that acts preferentially on linear dsDNA, processively degrading it from 5'-3', releasing 5'-phosphomononucleotides. Initiates on 5'-phosphate and 5'-hydroxyl ends. Also acts on linear ssDNA, nicked DNA and RNA. ATP enhances but is not necessary for exonuclease activity; has ATPase activity that is not stimulated by DNA. The old protein kills E.coli recB and recC mutants and interferes with phage lambda growth. Both the exonuclease and ATPase activities are required in vivo. Probably interferes with lambda phage by degrading its linear DNA. Isolated as a mutant able to lysogenize E.coli strain C cells normally not susceptible to lysis by phage P2. This Enterobacteriaceae (Bacteriophage P2) protein is Old nuclease.